Reading from the N-terminus, the 95-residue chain is Small ribosomal subunit protein bS6 (95 aa).

This sequence belongs to the bacterial ribosomal protein bS6 family.

Binds together with bS18 to 16S ribosomal RNA. This Corynebacterium jeikeium (strain K411) protein is Small ribosomal subunit protein bS6.